The primary structure comprises 140 residues: MAGFISNFFGVGDSDSQYEEPTEASQAAAPTESATNTRSTPKVVPMQGGKSVNSKIALFEPKIYSDVKEIATQLLKNQAVIINFDHVDDEMARRIVDFLTGTVFAINGEIERIGDEIFLCIPENYEVSGSTTSQFDTSKL.

Positions 15-47 are disordered; that stretch reads DSQYEEPTEASQAAAPTESATNTRSTPKVVPMQ.

Belongs to the SepF family. In terms of assembly, homodimer. Interacts with FtsZ.

The protein localises to the cytoplasm. In terms of biological role, cell division protein that is part of the divisome complex and is recruited early to the Z-ring. Probably stimulates Z-ring formation, perhaps through the cross-linking of FtsZ protofilaments. Its function overlaps with FtsA. The polypeptide is Cell division protein SepF (Lactiplantibacillus plantarum (strain ATCC BAA-793 / NCIMB 8826 / WCFS1) (Lactobacillus plantarum)).